The following is a 433-amino-acid chain: Pyrimidine-nucleoside phosphorylase (433 aa).

81 to 83 (KHS) serves as a coordination point for phosphate. K(+) is bound by residues G88 and T90. Residues T92, 108–110 (KMS), and T120 contribute to the phosphate site. Positions 168 and 187 each coordinate substrate. L243, A246, and E255 together coordinate K(+).

It belongs to the thymidine/pyrimidine-nucleoside phosphorylase family. Homodimer. Requires K(+) as cofactor.

It carries out the reaction uridine + phosphate = alpha-D-ribose 1-phosphate + uracil. The enzyme catalyses thymidine + phosphate = 2-deoxy-alpha-D-ribose 1-phosphate + thymine. The catalysed reaction is 2'-deoxyuridine + phosphate = 2-deoxy-alpha-D-ribose 1-phosphate + uracil. In terms of biological role, catalyzes phosphorolysis of the pyrimidine nucleosides uridine, thymidine and 2'-deoxyuridine with the formation of the corresponding pyrimidine base and ribose-1-phosphate. The sequence is that of Pyrimidine-nucleoside phosphorylase (pdp) from Staphylococcus aureus (strain Mu50 / ATCC 700699).